The primary structure comprises 73 residues: Antimicrobial peptide lumbricin-PG (73 aa).

The first 14 residues, 1-14, serve as a signal peptide directing secretion; it reads MLLTISDFLFLSLT. Positions 25–48 are disordered; that stretch reads RPWSDRKNNYSGPQFTYPPEKAPP.

It localises to the secreted. Displays antimicrobial activity against the Gram-positive bacterium S.aureus ATCC 2592, the Gram-negative bacteria E.coli ATCC 25922 and P.aeruginosa ATCC 27853, and the fungus C.albicans ATCC 2002. Displays stronger activity against P.aeruginosa and S.aureus than E.coli. Displays very weak hemolytic activity. In Metaphire guillelmi (Earthworm), this protein is Antimicrobial peptide lumbricin-PG.